A 553-amino-acid polypeptide reads, in one-letter code: Methionine--tRNA ligase (553 aa).

The 'HIGH' region signature appears at Pro-12 to His-22. Residues Cys-144, Cys-147, Cys-157, and Cys-160 each coordinate Zn(2+). A 'KMSKS' region motif is present at residues Lys-332–Ser-336. Lys-335 is an ATP binding site.

Belongs to the class-I aminoacyl-tRNA synthetase family. MetG type 1 subfamily. As to quaternary structure, monomer. It depends on Zn(2+) as a cofactor.

It is found in the cytoplasm. The enzyme catalyses tRNA(Met) + L-methionine + ATP = L-methionyl-tRNA(Met) + AMP + diphosphate. Functionally, is required not only for elongation of protein synthesis but also for the initiation of all mRNA translation through initiator tRNA(fMet) aminoacylation. The chain is Methionine--tRNA ligase from Dehalococcoides mccartyi (strain ATCC BAA-2100 / JCM 16839 / KCTC 5957 / BAV1).